The sequence spans 113 residues: Ribonuclease P protein component (113 aa).

Belongs to the RnpA family. In terms of assembly, consists of a catalytic RNA component (M1 or rnpB) and a protein subunit.

It carries out the reaction Endonucleolytic cleavage of RNA, removing 5'-extranucleotides from tRNA precursor.. Functionally, RNaseP catalyzes the removal of the 5'-leader sequence from pre-tRNA to produce the mature 5'-terminus. It can also cleave other RNA substrates such as 4.5S RNA. The protein component plays an auxiliary but essential role in vivo by binding to the 5'-leader sequence and broadening the substrate specificity of the ribozyme. This chain is Ribonuclease P protein component, found in Desulforamulus reducens (strain ATCC BAA-1160 / DSM 100696 / MI-1) (Desulfotomaculum reducens).